Here is a 345-residue protein sequence, read N- to C-terminus: Centromere protein U (345 aa).

Basic residues-rich tracts occupy residues 1–10 (MSSKKRTKRN) and 19–29 (HKGRSHPRRKF). Disordered regions lie at residues 1–37 (MSSKKRTKRNRAGDEYKEHKGRSHPRRKFLPPEEPDV) and 64–153 (AVDA…SSVQ). A compositionally biased stretch (basic and acidic residues) spans 88-106 (NAERSEKMLLETPEGDVHE). A compositionally biased stretch (low complexity) spans 142 to 152 (SDSSVNSPSSV). The stretch at 201-294 (CSAFEDQVTD…QDYLDYREEN (94 aa)) forms a coiled coil. Positions 222 to 239 (KKKNAKVVADIKKKRQRL) match the Nuclear localization signal motif.

This sequence belongs to the CENP-U/AME1 family. In terms of assembly, interacts with CENPH-CENPI complex at the kinetochore.

It localises to the nucleus. The protein resides in the chromosome. Its subcellular location is the centromere. In terms of biological role, probable component of a centromeric complex involved in assembly of kinetochore proteins, mitotic progression and chromosome segregation. Required for maintenance of sister chromatid adhesion during mitotic checkpoint activation. In Gallus gallus (Chicken), this protein is Centromere protein U (CENPU).